The sequence spans 126 residues: Methylglyoxal synthase (126 aa).

Residues 1-126 enclose the MGS-like domain; it reads MAERQKIALI…ADRLLPVITE (126 aa). Substrate contacts are provided by residues His12, Lys16, 38 to 41, and 59 to 60; these read TGTT and SG. Asp65 serves as the catalytic Proton donor/acceptor. His92 contributes to the substrate binding site.

It belongs to the methylglyoxal synthase family.

The enzyme catalyses dihydroxyacetone phosphate = methylglyoxal + phosphate. Functionally, catalyzes the formation of methylglyoxal from dihydroxyacetone phosphate. This Allorhizobium ampelinum (strain ATCC BAA-846 / DSM 112012 / S4) (Agrobacterium vitis (strain S4)) protein is Methylglyoxal synthase.